A 539-amino-acid chain; its full sequence is Chaperonin GroEL (539 aa).

ATP is bound by residues 29-32, 86-90, glycine 413, 477-479, and aspartate 493; these read TLGP, DGTTT, and NAA.

This sequence belongs to the chaperonin (HSP60) family. Forms a cylinder of 14 subunits composed of two heptameric rings stacked back-to-back. Interacts with the co-chaperonin GroES.

The protein localises to the cytoplasm. It carries out the reaction ATP + H2O + a folded polypeptide = ADP + phosphate + an unfolded polypeptide.. Together with its co-chaperonin GroES, plays an essential role in assisting protein folding. The GroEL-GroES system forms a nano-cage that allows encapsulation of the non-native substrate proteins and provides a physical environment optimized to promote and accelerate protein folding. This Clavibacter michiganensis subsp. michiganensis (strain NCPPB 382) protein is Chaperonin GroEL.